Consider the following 623-residue polypeptide: Pentatricopeptide repeat-containing protein At5g15340, mitochondrial (623 aa).

The transit peptide at 1–16 (MKCLSYQKVRLLLRHC) directs the protein to the mitochondrion. PPR repeat units lie at residues 42 to 72 (RSYLSNALFQFYASSGEMVTAQKLFDEIPLS), 75 to 109 (DNVDWTTLLSSFSRYGLLVNSMKLFVEMRRKRVEI), 110 to 144 (DDVSVVCLFGVCAKLEDLGFAQQGHGVAVKMGVLT), 145 to 179 (SVKVCNALMDMYGKCGLVSEVKRIFEELEEKSVVS), 180 to 206 (WTVVLDTVVKWEGLERGREVFHEMPER), 207 to 237 (NAVAWTVMVAGYLGAGFTREVLELLAEMVFR), 243 to 277 (NFVTLCSMLSACAQSGNLVVGRWVHVYALKKEMMM), 285 to 319 (DVMVGTALVDMYAKCGNIDSSMNVFRLMRKRNVVT), 320 to 346 (WNALFSGLAMHGKGRMVIDMFPQMIRE), 350 to 384 (DDLTFTAVLSACSHSGIVDEGWRCFHSLRFYGLEP), and 385 to 419 (KVDHYACMVDLLGRAGLIEEAEILMREMPVPPNEV). Residues 420–495 (VLGSLLGSCS…IPGLSSIYVN (76 aa)) are type E motif. The segment at 496-526 (DSVHRFSSGDRSHPRTKEIYLKLNEVIERIR) is type E(+) motif. Residues 527–623 (SAGYVPDVSG…GGSCSCSDYW (97 aa)) form a type DYW motif region.

This sequence belongs to the PPR family. PCMP-H subfamily.

The protein resides in the mitochondrion. The polypeptide is Pentatricopeptide repeat-containing protein At5g15340, mitochondrial (PCMP-H91) (Arabidopsis thaliana (Mouse-ear cress)).